Here is a 177-residue protein sequence, read N- to C-terminus: Probable prophage lysozyme (177 aa).

E35 serves as the catalytic Proton donor. D44 (nucleophile) is an active-site residue.

It belongs to the glycosyl hydrolase 24 family.

The enzyme catalyses Hydrolysis of (1-&gt;4)-beta-linkages between N-acetylmuramic acid and N-acetyl-D-glucosamine residues in a peptidoglycan and between N-acetyl-D-glucosamine residues in chitodextrins.. Essential for lysis of bacterial cell wall, by showing cell wall hydrolyzing activity. The chain is Probable prophage lysozyme (rrrQ) from Escherichia coli (strain K12).